We begin with the raw amino-acid sequence, 492 residues long: Probable cytochrome P450 513A3 (492 aa).

The chain crosses the membrane as a helical span at residues 1 to 21 (MTSLTLYLIIFSIILYLFVNR). Residue Cys-437 participates in heme binding.

This sequence belongs to the cytochrome P450 family. Requires heme as cofactor.

Its subcellular location is the membrane. The polypeptide is Probable cytochrome P450 513A3 (cyp513A3) (Dictyostelium discoideum (Social amoeba)).